The sequence spans 258 residues: Acetylglutamate kinase (258 aa).

Residues Gly-40–Gly-41, Arg-62, and Asn-158 each bind substrate.

This sequence belongs to the acetylglutamate kinase family. ArgB subfamily.

It localises to the cytoplasm. It catalyses the reaction N-acetyl-L-glutamate + ATP = N-acetyl-L-glutamyl 5-phosphate + ADP. It functions in the pathway amino-acid biosynthesis; L-arginine biosynthesis; N(2)-acetyl-L-ornithine from L-glutamate: step 2/4. In terms of biological role, catalyzes the ATP-dependent phosphorylation of N-acetyl-L-glutamate. The chain is Acetylglutamate kinase from Azobacteroides pseudotrichonymphae genomovar. CFP2.